Here is a 195-residue protein sequence, read N- to C-terminus: Probable GTP-binding protein EngB (195 aa).

The EngB-type G domain maps to Gly24 to Leu195. GTP is bound by residues Gly32–Ser39, Gly59–Thr63, Asp77–Gly80, Thr144–Asp147, and Tyr176–Ala178. Mg(2+) contacts are provided by Ser39 and Thr61.

It belongs to the TRAFAC class TrmE-Era-EngA-EngB-Septin-like GTPase superfamily. EngB GTPase family. Mg(2+) is required as a cofactor.

Functionally, necessary for normal cell division and for the maintenance of normal septation. The sequence is that of Probable GTP-binding protein EngB from Macrococcus caseolyticus (strain JCSC5402) (Macrococcoides caseolyticum).